We begin with the raw amino-acid sequence, 52 residues long: uncharacterized protein (52 aa).

This is an uncharacterized protein from Saccharomyces cerevisiae (strain ATCC 204508 / S288c) (Baker's yeast).